We begin with the raw amino-acid sequence, 225 residues long: NAD(P)H-quinone oxidoreductase subunit K, chloroplastic (225 aa).

Cys-43, Cys-44, Cys-108, and Cys-139 together coordinate [4Fe-4S] cluster.

The protein belongs to the complex I 20 kDa subunit family. As to quaternary structure, NDH is composed of at least 16 different subunits, 5 of which are encoded in the nucleus. The cofactor is [4Fe-4S] cluster.

The protein resides in the plastid. It localises to the chloroplast thylakoid membrane. The catalysed reaction is a plastoquinone + NADH + (n+1) H(+)(in) = a plastoquinol + NAD(+) + n H(+)(out). It catalyses the reaction a plastoquinone + NADPH + (n+1) H(+)(in) = a plastoquinol + NADP(+) + n H(+)(out). In terms of biological role, NDH shuttles electrons from NAD(P)H:plastoquinone, via FMN and iron-sulfur (Fe-S) centers, to quinones in the photosynthetic chain and possibly in a chloroplast respiratory chain. The immediate electron acceptor for the enzyme in this species is believed to be plastoquinone. Couples the redox reaction to proton translocation, and thus conserves the redox energy in a proton gradient. The chain is NAD(P)H-quinone oxidoreductase subunit K, chloroplastic from Barbarea verna (Land cress).